The primary structure comprises 283 residues: Peroxisome biogenesis protein 22 (283 aa).

Residue alanine 2 is modified to N-acetylalanine. A helical transmembrane segment spans residues 45–62 (IGAIAGLAIAVIFTWRAI). Residues 66–107 (GEQRQRRQPKRRIHNAETSSAAAAASQSNLASSVAPEVSSPR) are disordered. Low complexity predominate over residues 81 to 100 (AETSSAAAAASQSNLASSVA).

Belongs to the peroxin-22 family. Interacts with PEX4.

Its subcellular location is the peroxisome membrane. In terms of biological role, may be tethered PEX4 to the peroxisome membrane and may be involved in a late step of the matrix protein import. Does not play a role in the biogenesis of the peroxisomal membrane. The sequence is that of Peroxisome biogenesis protein 22 (PEX22) from Arabidopsis thaliana (Mouse-ear cress).